A 335-amino-acid polypeptide reads, in one-letter code: Ig gamma-2A chain C region secreted form (335 aa).

Ig-like domains are found at residues 6-98, 126-225, and 234-330; these read PSVY…KKIE, PSVF…KTIS, and PQVY…KTIS. The N-linked (GlcNAc...) asparagine glycan is linked to Asn-185.

Its subcellular location is the secreted. In Mus musculus (Mouse), this protein is Ig gamma-2A chain C region secreted form.